A 304-amino-acid chain; its full sequence is Glutaminase (304 aa).

The substrate site is built by S63, N114, E158, N165, Y189, Y240, and V258.

This sequence belongs to the glutaminase family. Homotetramer.

The catalysed reaction is L-glutamine + H2O = L-glutamate + NH4(+). The protein is Glutaminase of Shewanella putrefaciens (strain CN-32 / ATCC BAA-453).